Reading from the N-terminus, the 546-residue chain is Pre-mRNA-splicing factor 38B (546 aa).

Residues 1-14 show a composition bias toward polar residues; sequence MANNSPALTGNSQP. The disordered stretch occupies residues 1 to 40; the sequence is MANNSPALTGNSQPQHQAAAAAAQQQQQCGGGGATKPAVS. N-acetylalanine is present on Ala-2. Ser-5 bears the Phosphoserine mark. Residues 15–28 are compositionally biased toward low complexity; sequence QHQAAAAAAQQQQQ. Lys-227 is subject to N6-acetyllysine. Residues 229–546 form a disordered region; the sequence is IDQQIKTRPR…KQHKNKDETV (318 aa). The span at 243-255 shows a compositional bias: basic and acidic residues; sequence DGKEGAEEIDRHV. The span at 256–284 shows a compositional bias: basic residues; sequence ERRRSRSPRRSLSPRRSPRRSRSRSHHRE. Ser-288, Ser-290, Ser-318, and Ser-320 each carry phosphoserine. Over residues 291 to 327 the composition is skewed to basic and acidic residues; it reads FDRELEREKERQRLEREAKEREKERRRSRSIDRGLER. Positions 292 to 321 form a coiled coil; sequence DRELEREKERQRLEREAKEREKERRRSRSI. Over residues 328 to 344 the composition is skewed to basic residues; sequence RRSRSRERHRSRSRSRD. The segment covering 345 to 421 has biased composition (basic and acidic residues); sequence RKGDRRDRDR…HRDDKRDSKK (77 aa). Residues 422-450 show a composition bias toward basic residues; sequence EKKHSRSRSRERKHRSRSRSRNAGKRSRS. Ser-448 carries the phosphoserine modification. The span at 451–468 shows a compositional bias: basic and acidic residues; sequence RSKEKSSKHKNESKEKSN. Phosphoserine is present on residues Ser-473, Ser-475, and Ser-481. Residues 480 to 495 are compositionally biased toward basic and acidic residues; it reads DSVEKSKKREHSPSKE. Residues 496–510 are compositionally biased toward basic residues; the sequence is KSRKRSRSKERSHKR. Positions 511–546 are enriched in basic and acidic residues; that stretch reads DHSDSKDQSDKHDRRRSQSIEQESQEKQHKNKDETV. Residues Ser-527, Ser-529, and Ser-534 each carry the phosphoserine modification.

Belongs to the PRP38 family.

The protein resides in the nucleus. In terms of biological role, may be required for pre-mRNA splicing. The sequence is that of Pre-mRNA-splicing factor 38B (PRPF38B) from Homo sapiens (Human).